The primary structure comprises 611 residues: Elongation factor 4 (611 aa).

A tr-type G domain is found at 12–193 (AVIRNFCIIA…TIVAKVPAPE (182 aa)). Residues 24–29 (DHGKST) and 140–143 (NKID) each bind GTP.

The protein belongs to the TRAFAC class translation factor GTPase superfamily. Classic translation factor GTPase family. LepA subfamily.

It localises to the cell membrane. It carries out the reaction GTP + H2O = GDP + phosphate + H(+). Its function is as follows. Required for accurate and efficient protein synthesis under certain stress conditions. May act as a fidelity factor of the translation reaction, by catalyzing a one-codon backward translocation of tRNAs on improperly translocated ribosomes. Back-translocation proceeds from a post-translocation (POST) complex to a pre-translocation (PRE) complex, thus giving elongation factor G a second chance to translocate the tRNAs correctly. Binds to ribosomes in a GTP-dependent manner. The protein is Elongation factor 4 of Cutibacterium acnes (strain DSM 16379 / KPA171202) (Propionibacterium acnes).